A 118-amino-acid polypeptide reads, in one-letter code: UPF0251 protein Teth39_0655 (118 aa).

It belongs to the UPF0251 family.

This chain is UPF0251 protein Teth39_0655, found in Thermoanaerobacter pseudethanolicus (strain ATCC 33223 / 39E) (Clostridium thermohydrosulfuricum).